We begin with the raw amino-acid sequence, 261 residues long: MGNQSFKTLSIDDFLQITGWPDFSKLIKKEHDKVLAVQLPGTFVNFSKPQNSLKNRYNEIPCWDHSRVILIPPSAKYNYDHTDPSHITLTPTEIPSTYIHANFVNGFKEKRKFICCQTPKKNTCEHFWRMVLEQESHIIVSLTKTDKGGFVCHEYWLNAEEGMEIFGRYVIRTLEIIKESSFTKTRLRLTDVCTDASREIHHFWYTDWPDVGNPISPVQILDLILQMNKKRKELTQAAGFKLGPIVVPAPKESVEQEYFVP.

In terms of domain architecture, Tyrosine-protein phosphatase spans 26 to 261 (LIKKEHDKVL…ESVEQEYFVP (236 aa)).

The protein belongs to the protein-tyrosine phosphatase family.

In Microplitis demolitor bracovirus (isolate Webb) (MdBV), this protein is Tyrosine phosphatase-like protein H5 (H6).